Reading from the N-terminus, the 125-residue chain is Small ribosomal subunit protein eS6 (125 aa).

Residues 90–109 form a disordered region; the sequence is KGPGFRPKEKGERRKKTVRG.

Belongs to the eukaryotic ribosomal protein eS6 family. As to quaternary structure, part of the 30S ribosomal subunit.

This Pyrococcus furiosus (strain ATCC 43587 / DSM 3638 / JCM 8422 / Vc1) protein is Small ribosomal subunit protein eS6.